A 417-amino-acid polypeptide reads, in one-letter code: Histidine--tRNA ligase (417 aa).

Belongs to the class-II aminoacyl-tRNA synthetase family. As to quaternary structure, homodimer.

It is found in the cytoplasm. The enzyme catalyses tRNA(His) + L-histidine + ATP = L-histidyl-tRNA(His) + AMP + diphosphate + H(+). This chain is Histidine--tRNA ligase, found in Acetivibrio thermocellus (strain ATCC 27405 / DSM 1237 / JCM 9322 / NBRC 103400 / NCIMB 10682 / NRRL B-4536 / VPI 7372) (Clostridium thermocellum).